We begin with the raw amino-acid sequence, 114 residues long: SATSLTFQLAYLVKKIDFDYTPNWGRGTPSSYIDNLTFPKVLTDKKYSYRVVVNGSDLGVESNFAVTPSGGQTINFLQYNKGYGVADTKTIQVFVVIPDTGNSEEYIIAEWKKT.

Ser1 bears the N-acetylserine mark.

It belongs to the fungal immunomodulatory protein (FIP) family. In terms of assembly, homodimer.

In terms of biological role, lectin with specificity for complex cell-surface carbohydrates. Possesses immunomodulatory activity, stimulates lymphocyte mitogenesis, suppresses systemic anaphylaxis reactions and edema, enhances transcription of IL-2, IFN-gamma and TNF-alpha and hemagglutinates red blood cells. The chain is Immunomodulatory protein FIP-Fve from Flammulina velutipes (Agaricus velutipes).